A 333-amino-acid polypeptide reads, in one-letter code: Nucleoid-associated protein VV1_3120 (333 aa).

Belongs to the YejK family.

The protein localises to the cytoplasm. It localises to the nucleoid. This chain is Nucleoid-associated protein VV1_3120, found in Vibrio vulnificus (strain CMCP6).